The following is a 969-amino-acid chain: RNA polymerase-associated protein RapA (969 aa).

In terms of domain architecture, Helicase ATP-binding spans 164 to 334 (EVGRRHAPRV…FARLRLLDPD (171 aa)). 177–184 (DEVGLGKT) lines the ATP pocket. The DEAH box signature appears at 280–283 (DEAH). One can recognise a Helicase C-terminal domain in the interval 492–686 (RVNWLLEKVK…ELKSQLEQGR (195 aa)).

Belongs to the SNF2/RAD54 helicase family. RapA subfamily. As to quaternary structure, interacts with the RNAP. Has a higher affinity for the core RNAP than for the holoenzyme. Its ATPase activity is stimulated by binding to RNAP.

Functionally, transcription regulator that activates transcription by stimulating RNA polymerase (RNAP) recycling in case of stress conditions such as supercoiled DNA or high salt concentrations. Probably acts by releasing the RNAP, when it is trapped or immobilized on tightly supercoiled DNA. Does not activate transcription on linear DNA. Probably not involved in DNA repair. The sequence is that of RNA polymerase-associated protein RapA from Vibrio parahaemolyticus serotype O3:K6 (strain RIMD 2210633).